The primary structure comprises 772 residues: 1,4-alpha-glucan branching enzyme GlgB (772 aa).

Asp431 (nucleophile) is an active-site residue. The active-site Proton donor is the Glu484.

Belongs to the glycosyl hydrolase 13 family. GlgB subfamily. Monomer.

It catalyses the reaction Transfers a segment of a (1-&gt;4)-alpha-D-glucan chain to a primary hydroxy group in a similar glucan chain.. It participates in glycan biosynthesis; glycogen biosynthesis. Catalyzes the formation of the alpha-1,6-glucosidic linkages in glycogen by scission of a 1,4-alpha-linked oligosaccharide from growing alpha-1,4-glucan chains and the subsequent attachment of the oligosaccharide to the alpha-1,6 position. The chain is 1,4-alpha-glucan branching enzyme GlgB from Synechococcus sp. (strain RCC307).